Consider the following 395-residue polypeptide: WW domain-containing transcription regulator protein 1 (395 aa).

Lysine 46 is covalently cross-linked (Glycyl lysine isopeptide (Lys-Gly) (interchain with G-Cter in ubiquitin)). The tract at residues 52–116 is disordered; that stretch reads FFKEPDSGSH…AQQHAHLRQQ (65 aa). Positions 61–70 are enriched in polar residues; that stretch reads HSRQSSTDSS. A Phosphoserine modification is found at serine 62. Serine 89 carries the post-translational modification Phosphoserine; by LATS2. The 34-residue stretch at 124 to 157 folds into the WW domain; the sequence is LPLPPGWEMTFTATGQRYFLNHIEKITTWQDPRK. The tract at residues 221-395 is required for interaction with PALS1; it reads PNALTTQQQQ…NKSEPFLTWL (175 aa). Residues 224 to 258 are a coiled coil; the sequence is LTTQQQQQQKLRLQRIQMERERIRMRQEELMRQEA. The segment covering 277–293 has biased composition (polar residues); sequence PAMSTDMRSVTNSSSDP. Residues 277 to 308 are disordered; sequence PAMSTDMRSVTNSSSDPFLNGGPYHSREQSTD. Serine 290 is modified (phosphoserine). The residue at position 306 (serine 306) is a Phosphoserine; by LATS2. Residues 389–395 carry the PDZ-binding motif; sequence EPFLTWL.

As to quaternary structure, binds to SLC9A3R2 via the PDZ motif at the plasma membrane. Binds to YWHAZ in vivo and in vitro through the phosphoserine-binding motif RSHSSP. Interacts (via coiled-coil domain) with SMAD2 (via MH1 domain), SMAD3 and SMAD4. Interacts with MED15. Interacts with PAX8 and NKX2-1. Interacts with TEAD1, TEAD2, TEAD3 and TEAD4. Interacts (via WW domain) with PALS1. Interacts with LATS1. Interacts with YAP1 (when phosphorylated at 'Ser-112'). Interacts (via WW domain) with PRRG4 (via cytoplasmic domain). Interacts (via WW domain) with AMOTL2 (via PPXY motif); the interaction promotes WWTR1/TAZ localization to the cytoplasm and tight junctions, thereby inhibiting its transcriptional coactivator properties. Interacts (via WW domain) with AMOT; the interaction facilitates translocation of WWTR1/TAZ to the cytoplasm. Phosphorylated by LATS2 and STK3/MST2. Phosphorylation by LATS2 results in creation of 14-3-3 binding sites, retention in the cytoplasm, and functional inactivation. Phosphorylation results in the inhibition of transcriptional coactivation through YWHAZ-mediated nuclear export. Post-translationally, ubiquitinated at Lys-46; leading to proteasomal degradation. Deubiquitinated and stabilized by UCHL1 at Lys-46; leading to inhibition of osteoclastogenesis. As to expression, highly expressed in kidney, heart, placenta and lung.

It localises to the nucleus. Its subcellular location is the cytoplasm. It is found in the cell membrane. The protein localises to the cell junction. The protein resides in the tight junction. Its function is as follows. Transcriptional coactivator which acts as a downstream regulatory target in the Hippo signaling pathway that plays a pivotal role in organ size control and tumor suppression by restricting proliferation and promoting apoptosis. The core of this pathway is composed of a kinase cascade wherein STK3/MST2 and STK4/MST1, in complex with its regulatory protein SAV1, phosphorylates and activates LATS1/2 in complex with its regulatory protein MOB1, which in turn phosphorylates and inactivates YAP1 oncoprotein and WWTR1/TAZ. WWTR1 enhances PAX8 and NKX2-1/TTF1-dependent gene activation. In conjunction with YAP1, involved in the regulation of TGFB1-dependent SMAD2 and SMAD3 nuclear accumulation. Plays a key role in coupling SMADs to the transcriptional machinery such as the mediator complex. Regulates embryonic stem-cell self-renewal, promotes cell proliferation and epithelial-mesenchymal transition. This Mus musculus (Mouse) protein is WW domain-containing transcription regulator protein 1.